Consider the following 883-residue polypeptide: Serine/threonine-protein kinase greatwall (883 aa).

Met-1 carries the N-acetylmethionine modification. The 805-residue stretch at 35-839 folds into the Protein kinase domain; it reads FTIVKPISRG…IKELKCHPLF (805 aa). Residues 41–49 and Lys-62 each bind ATP; that span reads ISRGAFGKV. The active-site Proton acceptor is the Asp-156. Thr-209 and Thr-224 each carry phosphothreonine. A phosphoserine mark is found at Ser-295, Ser-373, and Ser-456. Thr-523 carries the post-translational modification Phosphothreonine. Phosphoserine occurs at positions 555, 559, 634, 661, and 672. Phosphothreonine is present on Thr-726. Position 729 is a phosphoserine (Ser-729). A Phosphothreonine; by CDK1 modification is found at Thr-745. One can recognise an AGC-kinase C-terminal domain in the interval 840–883; sequence SDVDWENLQHQTMPFIPQPDDETDTSYFEARNNAQHLTVSGFSL. Ser-879 and Ser-882 each carry phosphoserine.

It belongs to the protein kinase superfamily. AGC Ser/Thr protein kinase family. Phosphorylation at Thr-745 by CDK1 during M phase activates its kinase activity. Maximum phosphorylation occurs in prometaphase.

Its subcellular location is the cytoplasm. It is found in the cytoskeleton. The protein resides in the microtubule organizing center. The protein localises to the centrosome. It localises to the nucleus. It catalyses the reaction L-seryl-[protein] + ATP = O-phospho-L-seryl-[protein] + ADP + H(+). The enzyme catalyses L-threonyl-[protein] + ATP = O-phospho-L-threonyl-[protein] + ADP + H(+). Its function is as follows. Serine/threonine kinase that plays a key role in M phase by acting as a regulator of mitosis entry and maintenance. Acts by promoting the inactivation of protein phosphatase 2A (PP2A) during M phase: does not directly inhibit PP2A but acts by mediating phosphorylation and subsequent activation of ARPP19 and ENSA at 'Ser-62' and 'Ser-67', respectively. ARPP19 and ENSA are phosphatase inhibitors that specifically inhibit the PPP2R2D (PR55-delta) subunit of PP2A. Inactivation of PP2A during M phase is essential to keep cyclin-B1-CDK1 activity high. Following DNA damage, it is also involved in checkpoint recovery by being inhibited. This Canis lupus familiaris (Dog) protein is Serine/threonine-protein kinase greatwall (MASTL).